Consider the following 144-residue polypeptide: Superoxide dismutase [Mn], mitochondrial (144 aa).

The Mn(2+) site is built by His-10, His-58, and Asp-143.

Belongs to the iron/manganese superoxide dismutase family. In terms of assembly, homotetramer. The cofactor is Mn(2+).

The protein localises to the mitochondrion matrix. The catalysed reaction is 2 superoxide + 2 H(+) = H2O2 + O2. Functionally, destroys superoxide anion radicals which are normally produced within the cells and which are toxic to biological systems. This is Superoxide dismutase [Mn], mitochondrial from Branchiostoma floridae (Florida lancelet).